The sequence spans 87 residues: UPF0250 protein KPN78578_06520 (87 aa).

The protein belongs to the UPF0250 family.

This chain is UPF0250 protein KPN78578_06520, found in Klebsiella pneumoniae subsp. pneumoniae (strain ATCC 700721 / MGH 78578).